The primary structure comprises 1029 residues: 2-oxoglutarate dehydrogenase, mitochondrial (1029 aa).

Thiamine diphosphate is bound by residues Arg317, Asp415, Asn448, Ile450, and Gln676. 3 residues coordinate Mg(2+): Asp415, Asn448, and Ile450.

It belongs to the alpha-ketoglutarate dehydrogenase family. As to quaternary structure, homodimer. Component of the 2-oxoglutarate dehydrogenase complex. The cofactor is thiamine diphosphate. Requires Mg(2+) as cofactor.

Its subcellular location is the mitochondrion matrix. The enzyme catalyses N(6)-[(R)-lipoyl]-L-lysyl-[protein] + 2-oxoglutarate + H(+) = N(6)-[(R)-S(8)-succinyldihydrolipoyl]-L-lysyl-[protein] + CO2. Functionally, the 2-oxoglutarate dehydrogenase complex catalyzes the overall conversion of 2-oxoglutarate to succinyl-CoA and CO(2). It contains multiple copies of three enzymatic components: 2-oxoglutarate dehydrogenase (E1), dihydrolipoamide succinyltransferase (E2) and lipoamide dehydrogenase (E3). This Caenorhabditis elegans protein is 2-oxoglutarate dehydrogenase, mitochondrial (ogdh-1).